Here is a 146-residue protein sequence, read N- to C-terminus: Hemoglobin subunit beta (146 aa).

V1 is modified (N-acetylvaline). Positions 2–146 (HLTDAEKALV…VATALAHKYH (145 aa)) constitute a Globin domain. T12 is modified (phosphothreonine). At S44 the chain carries Phosphoserine. K59 is modified (N6-acetyllysine). H63 is a binding site for heme b. The residue at position 82 (K82) is an N6-acetyllysine. Residue H92 coordinates heme b. C93 carries the post-translational modification S-nitrosocysteine. K144 carries the post-translational modification N6-acetyllysine.

Belongs to the globin family. Heterotetramer of two alpha chains and two beta chains. As to expression, red blood cells.

Its function is as follows. Involved in oxygen transport from the lung to the various peripheral tissues. In Peromyscus californicus (California mouse), this protein is Hemoglobin subunit beta.